Reading from the N-terminus, the 585-residue chain is ATP-dependent lipid A-core flippase (585 aa).

5 helical membrane passes run 16–36 (LWPY…ALII), 66–86 (FLSM…ASGF), 156–176 (IIGL…ILLV), 252–272 (AIAN…VLVL), and 278–298 (LRAE…FGLM). The 285-residue stretch at 29-313 (VAVVALIINA…LTNVTSQFQR (285 aa)) folds into the ABC transmembrane type-1 domain. The ABC transporter domain occupies 345-581 (IQVKNVTFTY…DGAYAQLHRI (237 aa)). 379–386 (GRSGSGKS) serves as a coordination point for ATP.

This sequence belongs to the ABC transporter superfamily. Lipid exporter (TC 3.A.1.106) family. Homodimer.

It localises to the cell inner membrane. It carries out the reaction ATP + H2O + lipid A-core oligosaccharideSide 1 = ADP + phosphate + lipid A-core oligosaccharideSide 2.. In terms of biological role, involved in lipopolysaccharide (LPS) biosynthesis. Translocates lipid A-core from the inner to the outer leaflet of the inner membrane. Transmembrane domains (TMD) form a pore in the inner membrane and the ATP-binding domain (NBD) is responsible for energy generation. The polypeptide is ATP-dependent lipid A-core flippase (Photobacterium profundum (strain SS9)).